The following is a 345-amino-acid chain: MARSTVLTPEDEATPAVRHARWQDYFQLMKPRVMSLVVFTALTGLLAARTPIHPLLGAVAVLCIAIGAGASGALNMWYDADIDAKMRRTRGRPVPMGLVKGEEAATLGVVLSLLSVMLMGMAINWLAAGLLAFTIVFYAVVYTMWLKRWTAQNIVIGGLAGALPPAIGWAAATGHAPLNAWLMVLIIFLWTPPHFWALSLYISTDYAKAGVPMLPVVKGAKETRKQILLYSLALIPVCLAPAFTGLGGWLYLAVSGLGGLVFLTLAVRVFRSLAGEASDPRPADRDLYEVGEAAAKRGKPVGDAKHARNLFAFSILYLFALFAALLAEAVLGLPILNLHVLELPL.

A run of 9 helical transmembrane segments spans residues 33–53, 54–74, 105–125, 126–146, 154–174, 182–202, 226–246, 247–267, and 315–335; these read VMSL…TPIH, PLLG…SGAL, ATLG…AINW, LAAG…TMWL, IVIG…AATG, LMVL…SLYI, QILL…FTGL, GGWL…TLAV, and ILYL…GLPI.

The protein belongs to the UbiA prenyltransferase family. Protoheme IX farnesyltransferase subfamily.

It is found in the cell inner membrane. It carries out the reaction heme b + (2E,6E)-farnesyl diphosphate + H2O = Fe(II)-heme o + diphosphate. Its pathway is porphyrin-containing compound metabolism; heme O biosynthesis; heme O from protoheme: step 1/1. Converts heme B (protoheme IX) to heme O by substitution of the vinyl group on carbon 2 of heme B porphyrin ring with a hydroxyethyl farnesyl side group. The protein is Protoheme IX farnesyltransferase of Caulobacter sp. (strain K31).